The sequence spans 453 residues: Allantoinase (453 aa).

The Zn(2+) site is built by His-59, His-61, Lys-146, His-186, His-242, and Asp-315. N6-carboxylysine is present on Lys-146.

Belongs to the metallo-dependent hydrolases superfamily. Allantoinase family. In terms of assembly, homotetramer. Zn(2+) is required as a cofactor. In terms of processing, carboxylation allows a single lysine to coordinate two zinc ions.

The enzyme catalyses (S)-allantoin + H2O = allantoate + H(+). It participates in nitrogen metabolism; (S)-allantoin degradation; allantoate from (S)-allantoin: step 1/1. Catalyzes the conversion of allantoin (5-ureidohydantoin) to allantoic acid by hydrolytic cleavage of the five-member hydantoin ring. The protein is Allantoinase of Salmonella choleraesuis (strain SC-B67).